We begin with the raw amino-acid sequence, 518 residues long: MARAKRVKRDSVTHIYQTCKQAGTCPPDVVNKVEQTTVADNILKYGSAGVFFGGLGIGSGRGTGGATGYVPLSEGPGIRVGGTPTVVRPSLVPEAIGPVDILPIDTIDPVEPTASSVVPLTESTGPDLLPGEVETIAEIHPVAEGPSVDTPVVTTSTGSSAVLEVAPEPIPPTRVRISRTQYHNPSFQIITESTPAQGESSLADHILVTSGSGGQRIGADITDEIELQELPSRYTFENEEPTPPRRSSTPLQATRAAGRRRGVSLTNRRLVQQVPVENPLFLTQPSRLVRFAFENPAFEEEVTNIFEHDVDAFEEPPDRDFLDVQRLGRPQYSTTPAGYVRVSRLGTRATIRTRSGAQIGSQVHFYRDLSSINTEDPIELQLLGQHSGDASIVQGPVESTFIDVNVSENPLSESVEAFSDDLLLDEAVEDFSGSQLVIGNRRSTTSYTVPRFETTRSGSYYVQDSKGYYVAYPESRNNAEIIYPTPDIPVVVIHTHDNTGDFYLHPSLRWRKRKRKYL.

The Nuclear localization signal motif lies at 1-10 (MARAKRVKRD). The cysteines at positions 19 and 25 are disulfide-linked. The segment at 235 to 261 (TFENEEPTPPRRSSTPLQATRAAGRRR) is disordered. The Nuclear localization signal signature appears at 510-517 (WRKRKRKY).

This sequence belongs to the papillomaviridae L2 protein family. As to quaternary structure, interacts with major capsid protein L1. Interacts with E2; this interaction inhibits E2 transcriptional activity but not the DNA replication function E2. Interacts with host GADD45GIP1. Interacts with host HSPA8; this interaction is required for L2 nuclear translocation. Interacts with host importins KPNB2 and KPNB3. Forms a complex with importin alpha2-beta1 heterodimers via interaction with the importin alpha2 adapter. Interacts with host DYNLT1; this interaction is essential for virus intracellular transport during entry. Interacts (via C-terminus) with host retromer subunits VPS35 and VPS29. Post-translationally, highly phosphorylated.

It localises to the virion. Its subcellular location is the host nucleus. The protein localises to the host early endosome. It is found in the host Golgi apparatus. In terms of biological role, minor protein of the capsid that localizes along the inner surface of the virion, within the central cavities beneath the L1 pentamers. Plays a role in capsid stabilization through interaction with the major capsid protein L1. Once the virion enters the host cell, L2 escorts the genomic DNA into the nucleus by promoting escape from the endosomal compartments and traffic through the host Golgi network. Mechanistically, the C-terminus of L2 possesses a cell-penetrating peptide that protudes from the host endosome, interacts with host cytoplasmic retromer cargo and thereby mediates the capsid delivery to the host trans-Golgi network. Plays a role through its interaction with host dynein in the intracellular microtubule-dependent transport of viral capsid toward the nucleus. Mediates the viral genome import into the nucleus through binding to host importins. Once within the nucleus, L2 localizes viral genomes to host PML bodies in order to activate early gene expression for establishment of infection. Later on, promotes late gene expression by interacting with the viral E2 protein and by inhibiting its transcriptional activation functions. During virion assembly, encapsidates the genome by direct interaction with the viral DNA. This chain is Minor capsid protein L2, found in Human papillomavirus 36.